The following is a 357-amino-acid chain: CRISPR system Cms protein Csm5 (357 aa).

Belongs to the CRISPR-associated Csm5 family. In terms of assembly, part of the Csm effector complex that includes at least Cas10(1), Csm2(3), Csm3(5), Csm4(1), Csm5(1) and mature crRNA. The Csm complex is elongated and slightly twisted with a maximal length of 215 Angstroms and a diameter of 75-80 Angstroms. It has been modeled to have a central protein filamant of Csm3 subunits along which the dsRNA helix of paired crRNA and target RNA binds. The filament is capped at one end by Cas10 and Csm4 and at the other end by Csm5; ssDNA is thought to bind to the N-terminal HD domain of Cas10. Csm with a precursor crRNA does not include Csm5, while Cas6, the enzyme probably involved in pre-crRNA processing, is found associated with a subset of the Csm complex.

Its function is as follows. CRISPR (clustered regularly interspaced short palindromic repeat) is an adaptive immune system that provides protection against mobile genetic elements (viruses, transposable elements and conjugative plasmids). CRISPR clusters contain spacers, sequences complementary to antecedent mobile elements, and target invading nucleic acids. CRISPR clusters are transcribed and processed into CRISPR RNA (crRNA). The type III-A Csm effector complex binds crRNA and acts as a crRNA-guided RNase, DNase and cyclic oligoadenylate synthase; binding of target RNA cognate to the crRNA is required for all activities. In a heterologous host this Csm effector complex restricts ssRNA phage MS2, suggesting it may target RNA viruses in vivo. In terms of biological role, csm functions as a non-specific ssDNase. Base-pairing between crRNA and target RNA to form a ternary Csm complex activates a ssDNase activity; target RNA cleavage suppresses the ssDNase, a temporal control that prevents uncontrolled DNA degradation. Viral RNA transcripts probably tether the Csm complex to the viral genome, recruiting Cas10 ssDNA activity which is able to degrade DNA in the transcription bubble, spatially controlling the DNase activity. This subunit might be involved in maturation of a crRNA intermediate to its mature form. The chain is CRISPR system Cms protein Csm5 from Streptococcus thermophilus.